The primary structure comprises 326 residues: ATP-dependent 6-phosphofructokinase (326 aa).

Glycine 12 contacts ATP. An ADP-binding site is contributed by 22 to 26; sequence RAIIK. Residues 73–74 and 103–106 contribute to the ATP site; these read RF and GDGS. Residue aspartate 104 coordinates Mg(2+). A substrate-binding site is contributed by 126–128; that stretch reads TID. Residue aspartate 128 is the Proton acceptor of the active site. Arginine 155 is a binding site for ADP. Substrate is bound by residues arginine 163 and 170–172; that span reads MGH. ADP is bound by residues 186-188, lysine 212, and 215-217; these read GSE and KRS. Substrate is bound by residues glutamate 224, lysine 246, and 252 to 255; that span reads HIQR.

This sequence belongs to the phosphofructokinase type A (PFKA) family. ATP-dependent PFK group I subfamily. Prokaryotic clade 'B1' sub-subfamily. Homotetramer. Mg(2+) is required as a cofactor.

The protein resides in the cytoplasm. The catalysed reaction is beta-D-fructose 6-phosphate + ATP = beta-D-fructose 1,6-bisphosphate + ADP + H(+). Its pathway is carbohydrate degradation; glycolysis; D-glyceraldehyde 3-phosphate and glycerone phosphate from D-glucose: step 3/4. Allosterically activated by ADP and other diphosphonucleosides, and allosterically inhibited by phosphoenolpyruvate. In terms of biological role, catalyzes the phosphorylation of D-fructose 6-phosphate to fructose 1,6-bisphosphate by ATP, the first committing step of glycolysis. The sequence is that of ATP-dependent 6-phosphofructokinase from Mycoplasmopsis pulmonis (strain UAB CTIP) (Mycoplasma pulmonis).